A 252-amino-acid polypeptide reads, in one-letter code: Small ribosomal subunit protein eS4 (252 aa).

One can recognise an S4 RNA-binding domain in the interval 43–106 (LPLLILVRDM…NKYYRVIPVP (64 aa)).

The protein belongs to the eukaryotic ribosomal protein eS4 family.

The chain is Small ribosomal subunit protein eS4 from Desulfurococcus amylolyticus (strain DSM 18924 / JCM 16383 / VKM B-2413 / 1221n) (Desulfurococcus kamchatkensis).